We begin with the raw amino-acid sequence, 62 residues long: Pelophylaxin-4 (62 aa).

Residues M1–C22 form the signal peptide. A propeptide spanning residues E23 to Q45 is cleaved from the precursor. Position 60 is a leucine amide (L60). A propeptide is located at residue G61.

As to expression, expressed by the skin glands.

It localises to the secreted. Antimicrobial peptide. This is Pelophylaxin-4 from Pelophylax fukienensis (Fukien gold-striped pond frog).